We begin with the raw amino-acid sequence, 339 residues long: Glycerol-3-phosphate dehydrogenase [NAD(P)+] (339 aa).

NADPH is bound by residues Ser15, Tyr16, His36, and Lys110. Sn-glycerol 3-phosphate is bound by residues Lys110, Gly139, and Thr141. NADPH is bound at residue Ala143. Residues Lys195, Asp248, Ser258, Arg259, and Asn260 each coordinate sn-glycerol 3-phosphate. Residue Lys195 is the Proton acceptor of the active site. Arg259 serves as a coordination point for NADPH. Residues Val283 and Glu285 each coordinate NADPH.

This sequence belongs to the NAD-dependent glycerol-3-phosphate dehydrogenase family.

The protein localises to the cytoplasm. It catalyses the reaction sn-glycerol 3-phosphate + NAD(+) = dihydroxyacetone phosphate + NADH + H(+). The catalysed reaction is sn-glycerol 3-phosphate + NADP(+) = dihydroxyacetone phosphate + NADPH + H(+). It functions in the pathway membrane lipid metabolism; glycerophospholipid metabolism. Catalyzes the reduction of the glycolytic intermediate dihydroxyacetone phosphate (DHAP) to sn-glycerol 3-phosphate (G3P), the key precursor for phospholipid synthesis. The chain is Glycerol-3-phosphate dehydrogenase [NAD(P)+] from Enterobacter sp. (strain 638).